The sequence spans 102 residues: Antimicrobial peptide 1 (102 aa).

Positions methionine 1 to glycine 26 are cleaved as a signal peptide. Disulfide bonds link cysteine 37-cysteine 90, cysteine 47-cysteine 102, and cysteine 49-cysteine 75.

It localises to the secreted. Its function is as follows. Antimicrobial peptide which inhibits the growth of a variety of fungi, oomycetes, Gram-positive bacterial phytopatogenes and S.cerevisiae in vitro. No activity against E.coli. The chain is Antimicrobial peptide 1 from Macadamia integrifolia (Macadamia nut).